Here is a 477-residue protein sequence, read N- to C-terminus: PEP-dependent dihydroxyacetone kinase, phosphoryl donor subunit DhaM (477 aa).

Residues 1-135 (MIGLIIVSHS…QALQAKQQQL (135 aa)) enclose the PTS EIIA type-4 domain. Catalysis depends on His-9, which acts as the Tele-phosphohistidine intermediate. The region spanning 156 to 243 (ALTTQWVVKN…QLAQHNFGDN (88 aa)) is the HPr domain. His-170 (pros-phosphohistidine intermediate) is an active-site residue. Residues 269 to 477 (HAPNTELCIS…IETRSLIVAS (209 aa)) are PTS EI-like, N-terminal part. Catalysis depends on His-435, which acts as the Tele-phosphohistidine intermediate.

Belongs to the PEP-utilizing enzyme family. Homodimer. The dihydroxyacetone kinase complex is composed of a homodimer of DhaM, a homodimer of DhaK and the subunit DhaL.

It carries out the reaction dihydroxyacetone + phosphoenolpyruvate = dihydroxyacetone phosphate + pyruvate. In terms of biological role, component of the dihydroxyacetone kinase complex, which is responsible for the phosphoenolpyruvate (PEP)-dependent phosphorylation of dihydroxyacetone. DhaM serves as the phosphoryl donor. Is phosphorylated by phosphoenolpyruvate in an EI- and HPr-dependent reaction, and a phosphorelay system on histidine residues finally leads to phosphoryl transfer to DhaL and dihydroxyacetone. This Providencia stuartii (strain MRSN 2154) protein is PEP-dependent dihydroxyacetone kinase, phosphoryl donor subunit DhaM.